The primary structure comprises 159 residues: Cyclic pyranopterin monophosphate synthase (159 aa).

Substrate-binding positions include 75–77 (LCH) and 113–114 (ME). Asp128 is an active-site residue.

This sequence belongs to the MoaC family. In terms of assembly, homohexamer; trimer of dimers.

It catalyses the reaction (8S)-3',8-cyclo-7,8-dihydroguanosine 5'-triphosphate = cyclic pyranopterin phosphate + diphosphate. It functions in the pathway cofactor biosynthesis; molybdopterin biosynthesis. Functionally, catalyzes the conversion of (8S)-3',8-cyclo-7,8-dihydroguanosine 5'-triphosphate to cyclic pyranopterin monophosphate (cPMP). The sequence is that of Cyclic pyranopterin monophosphate synthase from Burkholderia multivorans (strain ATCC 17616 / 249).